Reading from the N-terminus, the 471-residue chain is Argininosuccinate lyase (471 aa).

It belongs to the lyase 1 family. Argininosuccinate lyase subfamily.

It localises to the cytoplasm. It carries out the reaction 2-(N(omega)-L-arginino)succinate = fumarate + L-arginine. It functions in the pathway amino-acid biosynthesis; L-arginine biosynthesis; L-arginine from L-ornithine and carbamoyl phosphate: step 3/3. The polypeptide is Argininosuccinate lyase (Renibacterium salmoninarum (strain ATCC 33209 / DSM 20767 / JCM 11484 / NBRC 15589 / NCIMB 2235)).